We begin with the raw amino-acid sequence, 357 residues long: Elongation factor Ts (357 aa).

The interval 82–85 is involved in Mg(2+) ion dislocation from EF-Tu; it reads TDFV.

Belongs to the EF-Ts family.

It is found in the cytoplasm. Functionally, associates with the EF-Tu.GDP complex and induces the exchange of GDP to GTP. It remains bound to the aminoacyl-tRNA.EF-Tu.GTP complex up to the GTP hydrolysis stage on the ribosome. In Campylobacter jejuni subsp. doylei (strain ATCC BAA-1458 / RM4099 / 269.97), this protein is Elongation factor Ts.